The chain runs to 598 residues: Chromodomain Y-like protein (598 aa).

The segment at 1-76 (MTFQASHRSA…VDKRKNKKGK (76 aa)) is disordered. Residues 44–56 (PSISVSSEQSGAQ) show a composition bias toward polar residues. A Chromo domain is found at 61–121 (LQVERIVDKR…RHTEKQKEST (61 aa)). The interval 61–309 (LQVERIVDKR…NIQTSVTGVT (249 aa)) is interaction with EZH2. Over residues 65–76 (RIVDKRKNKKGK) the composition is skewed to basic and acidic residues. At serine 88 the chain carries Phosphoserine. A compositionally biased stretch (basic and acidic residues) spans 112–121 (RHTEKQKEST). Residues 112–149 (RHTEKQKESTLTRTNRTSPNNARKQISRSTNSNFSKTS) are disordered. The span at 122–149 (LTRTNRTSPNNARKQISRSTNSNFSKTS) shows a compositional bias: polar residues. Residue lysine 135 is modified to N6,N6,N6-trimethyllysine; by EHMT2; alternate. Residue lysine 135 is modified to N6,N6-dimethyllysine; by EHMT2; alternate. Residue lysine 135 is modified to N6-methyllysine; by EHMT2; alternate. A phosphoserine mark is found at serine 170, serine 201, and serine 216. The disordered stretch occupies residues 204-226 (KSRTAVDGFQSESPEKLDPVEQG). The acetyl-CoA-binding domain stretch occupies residues 362-594 (SENNSLNPEV…DSMLKYLQRK (233 aa)).

As to quaternary structure, forms multimers and multimerization is required for stable binding to chromatin. Interacts with HDAC1 and HDAC2 via its C-terminal acetyl-CoA-binding domain. Interacts with EZH2, EED, SUZ12, REST, EHMT1 and EHMT2. Part of a complex containing at least CDYL, REST, WIZ, SETB1, EHMT1 and EHMT2. Part of a complex containing at least CDYL, MIER1, MIER2, HDAC1 and HDAC2. Interacts with CHAF1A and CHAF1B; bridging the CAF-1 complex to the MCM2-7 (MCM) complex. Interacts with MCM3 and MCM5; bridging the CAF-1 complex to the MCM2-7 (MCM) complex. Recruited to Xist RNA-coated X chromosome. Interacts with EHMT2 and PRDM9; interaction only takes place when PRDM9 is bound to hotspot DNA. Expressed in the hippocampus with reduced expression in epileptic tissue compared to normal adjacent tissue (at protein level). Ubiquitous. Expressed at moderate levels in all tissues examined. Isoform 2: Most abundantly expressed isoform.

The protein localises to the nucleus. The protein resides in the chromosome. It carries out the reaction 3-hydroxybutanoyl-CoA = (2E)-butenoyl-CoA + H2O. Chromatin reader protein that recognizes and binds histone H3 trimethylated at 'Lys-9', dimethylated at 'Lys-27' and trimethylated at 'Lys-27' (H3K9me3, H3K27me2 and H3K27me3, respectively). Part of multimeric repressive chromatin complexes, where it is required for transmission and restoration of repressive histone marks, thereby preserving the epigenetic landscape. Required for chromatin targeting and maximal enzymatic activity of Polycomb repressive complex 2 (PRC2); acts as a positive regulator of PRC2 activity by bridging the pre-existing histone H3K27me3 and newly recruited PRC2 on neighboring nucleosomes. Acts as a corepressor for REST by facilitating histone-lysine N-methyltransferase EHMT2 recruitment and H3K9 dimethylation at REST target genes for repression. Involved in X chromosome inactivation in females: recruited to Xist RNA-coated X chromosome and facilitates propagation of H3K9me2 by anchoring EHMT2. Promotes EZH2 accumulation and H3K27me3 methylation at DNA double strand breaks (DSBs), thereby facilitating transcriptional repression at sites of DNA damage and homology-directed repair of DSBs. Required for neuronal migration during brain development by repressing expression of RHOA. By repressing the expression of SCN8A, contributes to the inhibition of intrinsic neuronal excitability and epileptogenesis. In addition to acting as a chromatin reader, acts as a hydro-lyase. Shows crotonyl-coA hydratase activity by mediating the conversion of crotonyl-CoA ((2E)-butenoyl-CoA) to beta-hydroxybutyryl-CoA (3-hydroxybutanoyl-CoA), thereby acting as a negative regulator of histone crotonylation. Histone crotonylation is required during spermatogenesis; down-regulation of histone crotonylation by CDYL regulates the reactivation of sex chromosome-linked genes in round spermatids and histone replacement in elongating spermatids. By regulating histone crotonylation and trimethylation of H3K27, may be involved in stress-induced depression-like behaviors, possibly by regulating VGF expression. In terms of biological role, not able to recognize and bind histone H3K9me3, histone H3K27me2 and histone H3K27me3, due to the presence of a N-terminal extension that inactivates the chromo domain. Functionally, not able to recognize and bind histone H3K9me3, histone H3K27me2 and histone H3K27me3, due to the absence of the chromo domain. Acts as a negative regulator of isoform 2 by displacing isoform 2 from chromatin. This is Chromodomain Y-like protein from Homo sapiens (Human).